We begin with the raw amino-acid sequence, 321 residues long: ATP phosphoribosyltransferase regulatory subunit (321 aa).

It belongs to the class-II aminoacyl-tRNA synthetase family. HisZ subfamily. As to quaternary structure, heteromultimer composed of HisG and HisZ subunits.

It localises to the cytoplasm. The protein operates within amino-acid biosynthesis; L-histidine biosynthesis; L-histidine from 5-phospho-alpha-D-ribose 1-diphosphate: step 1/9. In terms of biological role, required for the first step of histidine biosynthesis. May allow the feedback regulation of ATP phosphoribosyltransferase activity by histidine. This is ATP phosphoribosyltransferase regulatory subunit from Thiobacillus denitrificans (strain ATCC 25259 / T1).